We begin with the raw amino-acid sequence, 61 residues long: MAKCFITGKKKSFGNSRSHAMNASRRTWKANLQKVRILVDGKPKRVWVSARALKSGKVKRV.

Belongs to the bacterial ribosomal protein bL28 family.

The chain is Large ribosomal subunit protein bL28 from Geobacillus kaustophilus (strain HTA426).